The chain runs to 393 residues: 1-deoxy-D-xylulose 5-phosphate reductoisomerase (393 aa).

Threonine 10, glycine 11, serine 12, isoleucine 13, glutamine 38, and asparagine 124 together coordinate NADPH. Residue lysine 125 participates in 1-deoxy-D-xylulose 5-phosphate binding. An NADPH-binding site is contributed by glutamate 126. Aspartate 150 lines the Mn(2+) pocket. 1-deoxy-D-xylulose 5-phosphate contacts are provided by serine 151, glutamate 152, serine 179, and histidine 202. Glutamate 152 contacts Mn(2+). Glycine 208 contacts NADPH. 1-deoxy-D-xylulose 5-phosphate-binding residues include serine 215, asparagine 220, lysine 221, and glutamate 224. Glutamate 224 provides a ligand contact to Mn(2+).

It belongs to the DXR family. Mg(2+) serves as cofactor. Requires Mn(2+) as cofactor.

It carries out the reaction 2-C-methyl-D-erythritol 4-phosphate + NADP(+) = 1-deoxy-D-xylulose 5-phosphate + NADPH + H(+). It participates in isoprenoid biosynthesis; isopentenyl diphosphate biosynthesis via DXP pathway; isopentenyl diphosphate from 1-deoxy-D-xylulose 5-phosphate: step 1/6. Functionally, catalyzes the NADPH-dependent rearrangement and reduction of 1-deoxy-D-xylulose-5-phosphate (DXP) to 2-C-methyl-D-erythritol 4-phosphate (MEP). This Ralstonia nicotianae (strain ATCC BAA-1114 / GMI1000) (Ralstonia solanacearum) protein is 1-deoxy-D-xylulose 5-phosphate reductoisomerase.